The following is a 439-amino-acid chain: GTPase Der (439 aa).

2 EngA-type G domains span residues 4–169 and 177–352; these read AMVA…PEND and IKIA…EEYN. Residues 10 to 17, 57 to 61, 120 to 123, 183 to 190, 230 to 234, and 295 to 298 each bind GTP; these read GRPNVGKS, DTGGL, NKVD, DTAGI, and NKWD. The region spanning 353–437 is the KH-like domain; it reads KRITTGLLNN…PIVISTKKRG (85 aa).

The protein belongs to the TRAFAC class TrmE-Era-EngA-EngB-Septin-like GTPase superfamily. EngA (Der) GTPase family. Associates with the 50S ribosomal subunit.

Functionally, GTPase that plays an essential role in the late steps of ribosome biogenesis. This chain is GTPase Der, found in Caldanaerobacter subterraneus subsp. tengcongensis (strain DSM 15242 / JCM 11007 / NBRC 100824 / MB4) (Thermoanaerobacter tengcongensis).